Here is a 459-residue protein sequence, read N- to C-terminus: Phosphomethylpyrimidine synthase (459 aa).

Substrate is bound by residues N80, M109, Y139, H175, 195-197 (SRG), 236-239 (DSLR), and E275. H279 provides a ligand contact to Zn(2+). Residue Y302 participates in substrate binding. H343 is a binding site for Zn(2+). Residues C423, C426, and C431 each coordinate [4Fe-4S] cluster.

Belongs to the ThiC family. [4Fe-4S] cluster serves as cofactor.

It carries out the reaction 5-amino-1-(5-phospho-beta-D-ribosyl)imidazole + S-adenosyl-L-methionine = 4-amino-2-methyl-5-(phosphooxymethyl)pyrimidine + CO + 5'-deoxyadenosine + formate + L-methionine + 3 H(+). It participates in cofactor biosynthesis; thiamine diphosphate biosynthesis. Catalyzes the synthesis of the hydroxymethylpyrimidine phosphate (HMP-P) moiety of thiamine from aminoimidazole ribotide (AIR) in a radical S-adenosyl-L-methionine (SAM)-dependent reaction. The chain is Phosphomethylpyrimidine synthase from Prochlorococcus marinus (strain MIT 9211).